A 373-amino-acid polypeptide reads, in one-letter code: Bifunctional enzyme IspD/IspF (373 aa).

Positions 1 to 212 (MPDITLILLG…PCIEAPSGKT (212 aa)) are 2-C-methyl-D-erythritol 4-phosphate cytidylyltransferase. The interval 213 to 373 (LTGFGLDIHP…NLTYYNWKQK (161 aa)) is 2-C-methyl-D-erythritol 2,4-cyclodiphosphate synthase. The a divalent metal cation site is built by aspartate 219 and histidine 221. 4-CDP-2-C-methyl-D-erythritol 2-phosphate contacts are provided by residues 219–221 (DIH) and 245–246 (HS). Histidine 253 contributes to the a divalent metal cation binding site. Residues 267–269 (DIG), 272–276 (YPDTD), 343–346 (TTAE), phenylalanine 350, and arginine 353 contribute to the 4-CDP-2-C-methyl-D-erythritol 2-phosphate site.

This sequence in the N-terminal section; belongs to the IspD/TarI cytidylyltransferase family. IspD subfamily. In the C-terminal section; belongs to the IspF family. A divalent metal cation serves as cofactor.

It carries out the reaction 2-C-methyl-D-erythritol 4-phosphate + CTP + H(+) = 4-CDP-2-C-methyl-D-erythritol + diphosphate. The catalysed reaction is 4-CDP-2-C-methyl-D-erythritol 2-phosphate = 2-C-methyl-D-erythritol 2,4-cyclic diphosphate + CMP. It functions in the pathway isoprenoid biosynthesis; isopentenyl diphosphate biosynthesis via DXP pathway; isopentenyl diphosphate from 1-deoxy-D-xylulose 5-phosphate: step 2/6. Its pathway is isoprenoid biosynthesis; isopentenyl diphosphate biosynthesis via DXP pathway; isopentenyl diphosphate from 1-deoxy-D-xylulose 5-phosphate: step 4/6. Its function is as follows. Bifunctional enzyme that catalyzes the formation of 4-diphosphocytidyl-2-C-methyl-D-erythritol from CTP and 2-C-methyl-D-erythritol 4-phosphate (MEP) (IspD), and catalyzes the conversion of 4-diphosphocytidyl-2-C-methyl-D-erythritol 2-phosphate (CDP-ME2P) to 2-C-methyl-D-erythritol 2,4-cyclodiphosphate (ME-CPP) with a corresponding release of cytidine 5-monophosphate (CMP) (IspF). This is Bifunctional enzyme IspD/IspF from Sulfurovum sp. (strain NBC37-1).